The following is a 586-amino-acid chain: Aspartate--tRNA ligase (586 aa).

Position 171 (E171) interacts with L-aspartate. Residues 195–198 form an aspartate region; sequence QLFK. R217 is a binding site for L-aspartate. Residues 217–219 and Q226 each bind ATP; that span reads RDE. H448 contacts L-aspartate. ATP is bound at residue E482. R489 is a binding site for L-aspartate. Position 534–537 (534–537) interacts with ATP; sequence GLDR.

Belongs to the class-II aminoacyl-tRNA synthetase family. Type 1 subfamily. As to quaternary structure, homodimer.

Its subcellular location is the cytoplasm. It catalyses the reaction tRNA(Asp) + L-aspartate + ATP = L-aspartyl-tRNA(Asp) + AMP + diphosphate. In terms of biological role, catalyzes the attachment of L-aspartate to tRNA(Asp) in a two-step reaction: L-aspartate is first activated by ATP to form Asp-AMP and then transferred to the acceptor end of tRNA(Asp). The protein is Aspartate--tRNA ligase of Buchnera aphidicola subsp. Acyrthosiphon pisum (strain APS) (Acyrthosiphon pisum symbiotic bacterium).